The chain runs to 85 residues: Large ribosomal subunit protein bL31B (85 aa).

Belongs to the bacterial ribosomal protein bL31 family. Type B subfamily. In terms of assembly, part of the 50S ribosomal subunit.

In Pseudomonas entomophila (strain L48), this protein is Large ribosomal subunit protein bL31B.